A 160-amino-acid polypeptide reads, in one-letter code: MNLNFNPLETNLVNLAIVIGVLFWFLRGFLGGILERRRSAILQDLQDAEARLKTASEELTKAQSELAAAQQKAEQIRIDGQKRAAAIRAEGEKRTISVMAAIKQGAAADADAEASRIKDALRREAAMAAIDKVLTDLPGRLDDAAQSRLIDSTIRNLENA.

Residues 15–35 (LAIVIGVLFWFLRGFLGGILE) traverse the membrane as a helical segment.

It belongs to the ATPase B chain family. F-type ATPases have 2 components, F(1) - the catalytic core - and F(0) - the membrane proton channel. F(1) has five subunits: alpha(3), beta(3), gamma(1), delta(1), epsilon(1). F(0) has four main subunits: a(1), b(1), b'(1) and c(10-14). The alpha and beta chains form an alternating ring which encloses part of the gamma chain. F(1) is attached to F(0) by a central stalk formed by the gamma and epsilon chains, while a peripheral stalk is formed by the delta, b and b' chains.

It is found in the cellular thylakoid membrane. Functionally, f(1)F(0) ATP synthase produces ATP from ADP in the presence of a proton or sodium gradient. F-type ATPases consist of two structural domains, F(1) containing the extramembraneous catalytic core and F(0) containing the membrane proton channel, linked together by a central stalk and a peripheral stalk. During catalysis, ATP synthesis in the catalytic domain of F(1) is coupled via a rotary mechanism of the central stalk subunits to proton translocation. In terms of biological role, component of the F(0) channel, it forms part of the peripheral stalk, linking F(1) to F(0). This chain is ATP synthase subunit b, found in Synechococcus sp. (strain CC9902).